Here is a 218-residue protein sequence, read N- to C-terminus: Pyridoxal 5'-phosphate synthase subunit PdxT (218 aa).

54–56 (GES) contributes to the L-glutamine binding site. Cys-86 acts as the Nucleophile in catalysis. L-glutamine is bound by residues Arg-120 and 149–150 (IR). Residues His-197 and Glu-199 each act as charge relay system in the active site.

Belongs to the glutaminase PdxT/SNO family. In the presence of PdxS, forms a dodecamer of heterodimers. Only shows activity in the heterodimer.

It catalyses the reaction aldehydo-D-ribose 5-phosphate + D-glyceraldehyde 3-phosphate + L-glutamine = pyridoxal 5'-phosphate + L-glutamate + phosphate + 3 H2O + H(+). The catalysed reaction is L-glutamine + H2O = L-glutamate + NH4(+). It participates in cofactor biosynthesis; pyridoxal 5'-phosphate biosynthesis. Catalyzes the hydrolysis of glutamine to glutamate and ammonia as part of the biosynthesis of pyridoxal 5'-phosphate. The resulting ammonia molecule is channeled to the active site of PdxS. This is Pyridoxal 5'-phosphate synthase subunit PdxT from Saccharopolyspora erythraea (strain ATCC 11635 / DSM 40517 / JCM 4748 / NBRC 13426 / NCIMB 8594 / NRRL 2338).